The chain runs to 185 residues: Ribosome-recycling factor (185 aa).

This sequence belongs to the RRF family.

It localises to the cytoplasm. Responsible for the release of ribosomes from messenger RNA at the termination of protein biosynthesis. May increase the efficiency of translation by recycling ribosomes from one round of translation to another. The sequence is that of Ribosome-recycling factor from Syntrophobacter fumaroxidans (strain DSM 10017 / MPOB).